The following is a 127-amino-acid chain: Thioredoxin domain-containing protein 8 (127 aa).

A Thioredoxin domain is found at 1–92; that stretch reads MVQIIKDTNE…SQKVTLFSRI (92 aa). A disulfide bond links cysteine 32 and cysteine 35.

This sequence belongs to the thioredoxin family. As to expression, testis-specific. Only expressed during spermiogenesis, prominently in the Golgi apparatus of pachytene spermatocytes and round and elongated spermatids, with a transient localization in the developing acrosome of round spermatids (at protein level).

It is found in the cytoplasm. It localises to the golgi apparatus. Its function is as follows. May be required for post-translational modifications of proteins required for acrosomal biogenesis. May act by reducing disulfide bonds within the sperm. The polypeptide is Thioredoxin domain-containing protein 8 (TXNDC8) (Homo sapiens (Human)).